A 559-amino-acid polypeptide reads, in one-letter code: U-box domain-containing protein 41 (559 aa).

2 disordered regions span residues 1-30 and 121-156; these read MGGN…KHDE and RMDK…SPSD. The span at 12–24 shows a compositional bias: polar residues; sequence HQRSSSATTTTLP. The region spanning 30-104 is the U-box domain; sequence ETPPEFLCPI…FSWCDRQKVD (75 aa). ARM repeat units follow at residues 266 to 305, 307 to 346, 348 to 388, 390 to 427, and 428 to 472; these read EDLR…NLSL, KQNK…SLAL, DENK…HLSL, PSNR…NLAA, and CPDG…TLCQ.

It catalyses the reaction S-ubiquitinyl-[E2 ubiquitin-conjugating enzyme]-L-cysteine + [acceptor protein]-L-lysine = [E2 ubiquitin-conjugating enzyme]-L-cysteine + N(6)-ubiquitinyl-[acceptor protein]-L-lysine.. It participates in protein modification; protein ubiquitination. Functionally, functions as an E3 ubiquitin ligase. The sequence is that of U-box domain-containing protein 41 (PUB41) from Arabidopsis thaliana (Mouse-ear cress).